Here is a 342-residue protein sequence, read N- to C-terminus: N-alpha-acetyl-L-2,4-diaminobutyric acid deacetylase (342 aa).

Residues 103–124 (TAGRRTSPMDGGNLNRSFPGDP) are disordered.

The protein belongs to the DoeB deacetylase family. It depends on Zn(2+) as a cofactor.

The protein localises to the cytoplasm. The catalysed reaction is (2S)-2-acetamido-4-aminobutanoate + H2O = L-2,4-diaminobutanoate + acetate. In terms of biological role, involved in the degradation of ectoine, which allows H.elongata to utilize ectoine as both a carbon and a nitrogen source for growth. Catalyzes the deacetylation of N-alpha-acetyl-L-2,4-diaminobutyrate (N-alpha-Ac-DABA) to yield L-2,4-diaminobutyrate (DABA). The sequence is that of N-alpha-acetyl-L-2,4-diaminobutyric acid deacetylase from Halomonas elongata (strain ATCC 33173 / DSM 2581 / NBRC 15536 / NCIMB 2198 / 1H9).